Reading from the N-terminus, the 484-residue chain is Chromosomal replication initiator protein DnaA (484 aa).

A domain I, interacts with DnaA modulators region spans residues 1-73; that stretch reads MQEGKNIWSL…EILIEKGHST (73 aa). Residues 73-140 are domain II; sequence TINVEFIHSQ…EEIHIKYRNP (68 aa). Positions 141-357 are domain III, AAA+ region; the sequence is FLKKKYTFEN…AAVTKLKAHI (217 aa). Residues Gly-185, Gly-187, Lys-188, and Thr-189 each contribute to the ATP site. The interval 358–484 is domain IV, binds dsDNA; it reads DLEDIEIDTN…IELMNKINKN (127 aa).

This sequence belongs to the DnaA family. As to quaternary structure, oligomerizes as a right-handed, spiral filament on DNA at oriC.

The protein localises to the cytoplasm. In terms of biological role, plays an essential role in the initiation and regulation of chromosomal replication. ATP-DnaA binds to the origin of replication (oriC) to initiate formation of the DNA replication initiation complex once per cell cycle. Binds the DnaA box (a 9 base pair repeat at the origin) and separates the double-stranded (ds)DNA. Forms a right-handed helical filament on oriC DNA; dsDNA binds to the exterior of the filament while single-stranded (ss)DNA is stabiized in the filament's interior. The ATP-DnaA-oriC complex binds and stabilizes one strand of the AT-rich DNA unwinding element (DUE), permitting loading of DNA polymerase. After initiation quickly degrades to an ADP-DnaA complex that is not apt for DNA replication. Binds acidic phospholipids. The protein is Chromosomal replication initiator protein DnaA of Borrelia recurrentis (strain A1).